Reading from the N-terminus, the 506-residue chain is Ubiquitin carboxyl-terminal hydrolase 22 (506 aa).

A UBP-type zinc finger spans residues 4–121 (AGCSHVNGFK…KEEQRKAWKL (118 aa)). Positions 6, 8, 46, 49, 59, 62, 67, 72, 76, 82, 95, and 98 each coordinate Zn(2+). Residues 159-501 (RGLINLGNTC…EGYLLFYHKQ (343 aa)) enclose the USP domain. The Nucleophile role is filled by Cys-168. His-460 serves as the catalytic Proton acceptor.

Belongs to the peptidase C19 family. UBP8 subfamily. Component of some SAGA transcription coactivator-HAT complexes.

Its subcellular location is the nucleus. The catalysed reaction is Thiol-dependent hydrolysis of ester, thioester, amide, peptide and isopeptide bonds formed by the C-terminal Gly of ubiquitin (a 76-residue protein attached to proteins as an intracellular targeting signal).. Histone deubiquitinating component of the transcription regulatory histone acetylation (HAT) complex SAGA. Catalyzes the deubiquitination of both histones H2A and H2B, thereby acting as a coactivator. Recruited to specific gene promoters by activators, where it is required for transcription. The polypeptide is Ubiquitin carboxyl-terminal hydrolase 22 (usp22) (Danio rerio (Zebrafish)).